The sequence spans 34 residues: MEVNILAFIATALFVLIPTAFLIILYVKTESSSS.

A helical membrane pass occupies residues 5 to 25 (ILAFIATALFVLIPTAFLIIL).

This sequence belongs to the PsbM family. As to quaternary structure, PSII is composed of 1 copy each of membrane proteins PsbA, PsbB, PsbC, PsbD, PsbE, PsbF, PsbH, PsbI, PsbJ, PsbK, PsbL, PsbM, PsbT, PsbX, PsbY, PsbZ, Psb30/Ycf12, at least 3 peripheral proteins of the oxygen-evolving complex and a large number of cofactors. It forms dimeric complexes.

The protein localises to the plastid. Its subcellular location is the chloroplast thylakoid membrane. In terms of biological role, one of the components of the core complex of photosystem II (PSII). PSII is a light-driven water:plastoquinone oxidoreductase that uses light energy to abstract electrons from H(2)O, generating O(2) and a proton gradient subsequently used for ATP formation. It consists of a core antenna complex that captures photons, and an electron transfer chain that converts photonic excitation into a charge separation. This subunit is found at the monomer-monomer interface. The polypeptide is Photosystem II reaction center protein M (Zygnema circumcarinatum (Green alga)).